Consider the following 114-residue polypeptide: Large ribosomal subunit protein bL20c (114 aa).

This sequence belongs to the bacterial ribosomal protein bL20 family.

The protein resides in the plastid. The protein localises to the chloroplast. Its function is as follows. Binds directly to 23S ribosomal RNA and is necessary for the in vitro assembly process of the 50S ribosomal subunit. It is not involved in the protein synthesizing functions of that subunit. In Trieres chinensis (Marine centric diatom), this protein is Large ribosomal subunit protein bL20c (rpl20).